Consider the following 168-residue polypeptide: ATP synthase F(1) complex subunit delta, mitochondrial (168 aa).

A mitochondrion-targeting transit peptide spans 1–22 (MLPASLLRHPGLRRLMLQARTY). 2 positions are modified to N6-acetyllysine; alternate: Lys136 and Lys165. Residues Lys136 and Lys165 each carry the N6-succinyllysine; alternate modification.

It belongs to the ATPase epsilon chain family. Component of the ATP synthase complex composed at least of ATP5F1A/subunit alpha, ATP5F1B/subunit beta, ATP5MC1/subunit c (homooctomer), MT-ATP6/subunit a, MT-ATP8/subunit 8, ATP5ME/subunit e, ATP5MF/subunit f, ATP5MG/subunit g, ATP5MK/subunit k, ATP5MJ/subunit j, ATP5F1C/subunit gamma, ATP5F1D/subunit delta, ATP5F1E/subunit epsilon, ATP5PF/subunit F6, ATP5PB/subunit b, ATP5PD/subunit d, ATP5PO/subunit OSCP. ATP synthase complex consists of a soluble F(1) head domain (subunits alpha(3) and beta(3)) - the catalytic core - and a membrane F(0) domain - the membrane proton channel (subunits c, a, 8, e, f, g, k and j). These two domains are linked by a central stalk (subunits gamma, delta, and epsilon) rotating inside the F1 region and a stationary peripheral stalk (subunits F6, b, d, and OSCP). Component of a complex composed at least by ATPIF1, ATP5F1A, ATP5F1B, ATP5F1C AND ATP5F1E.

It is found in the mitochondrion. Its subcellular location is the mitochondrion inner membrane. Its function is as follows. Subunit delta, of the mitochondrial membrane ATP synthase complex (F(1)F(0) ATP synthase or Complex V) that produces ATP from ADP in the presence of a proton gradient across the membrane which is generated by electron transport complexes of the respiratory chain. ATP synthase complex consist of a soluble F(1) head domain - the catalytic core - and a membrane F(1) domain - the membrane proton channel. These two domains are linked by a central stalk rotating inside the F(1) region and a stationary peripheral stalk. During catalysis, ATP synthesis in the catalytic domain of F(1) is coupled via a rotary mechanism of the central stalk subunits to proton translocation. In vivo, can only synthesize ATP although its ATP hydrolase activity can be activated artificially in vitro. With the central stalk subunit gamma, is essential for the biogenesis of F(1) catalytic part of the ATP synthase complex namely in the formation of F1 assembly intermediate. The protein is ATP synthase F(1) complex subunit delta, mitochondrial of Mus musculus (Mouse).